The primary structure comprises 256 residues: UPF0246 protein TERTU_4575 (256 aa).

The protein belongs to the UPF0246 family.

The chain is UPF0246 protein TERTU_4575 from Teredinibacter turnerae (strain ATCC 39867 / T7901).